A 48-amino-acid chain; its full sequence is Large ribosomal subunit protein bL32 (48 aa).

Residues Leu24–Tyr48 form a disordered region.

The protein belongs to the bacterial ribosomal protein bL32 family.

This chain is Large ribosomal subunit protein bL32, found in Campylobacter lari (strain RM2100 / D67 / ATCC BAA-1060).